The following is a 326-amino-acid chain: Nicotianamine synthase 2 (326 aa).

The protein belongs to the nicotianamine synthase (NAS)-like family. In terms of tissue distribution, expressed in roots.

It carries out the reaction 3 S-adenosyl-L-methionine = nicotianamine + 3 S-methyl-5'-thioadenosine + 3 H(+). Its function is as follows. Synthesizes nicotianamine, a polyamine that is the first intermediate in the synthesis of the phytosiderophores of the mugineic acid type found in gramineae which serve as a sensor for the physiological iron status within the plant, and/or might be involved in the transport of iron. The protein is Nicotianamine synthase 2 (NAS2) of Oryza sativa subsp. japonica (Rice).